Reading from the N-terminus, the 194-residue chain is Protein GrpE (194 aa).

This sequence belongs to the GrpE family. In terms of assembly, homodimer.

The protein localises to the cytoplasm. Participates actively in the response to hyperosmotic and heat shock by preventing the aggregation of stress-denatured proteins, in association with DnaK and GrpE. It is the nucleotide exchange factor for DnaK and may function as a thermosensor. Unfolded proteins bind initially to DnaJ; upon interaction with the DnaJ-bound protein, DnaK hydrolyzes its bound ATP, resulting in the formation of a stable complex. GrpE releases ADP from DnaK; ATP binding to DnaK triggers the release of the substrate protein, thus completing the reaction cycle. Several rounds of ATP-dependent interactions between DnaJ, DnaK and GrpE are required for fully efficient folding. In Aliivibrio fischeri (strain ATCC 700601 / ES114) (Vibrio fischeri), this protein is Protein GrpE.